Here is an 82-residue protein sequence, read N- to C-terminus: Small ribosomal subunit protein bS16 (82 aa).

The protein belongs to the bacterial ribosomal protein bS16 family.

This Vibrio parahaemolyticus serotype O3:K6 (strain RIMD 2210633) protein is Small ribosomal subunit protein bS16.